Here is a 174-residue protein sequence, read N- to C-terminus: Small ribosomal subunit protein uS5 (174 aa).

An S5 DRBM domain is found at 19–82; sequence LREKMVAINR…DEARRKMVKV (64 aa).

The protein belongs to the universal ribosomal protein uS5 family. Part of the 30S ribosomal subunit. Contacts proteins S4 and S8.

Its function is as follows. With S4 and S12 plays an important role in translational accuracy. Located at the back of the 30S subunit body where it stabilizes the conformation of the head with respect to the body. This is Small ribosomal subunit protein uS5 from Azoarcus sp. (strain BH72).